The chain runs to 408 residues: Arginine deiminase (408 aa).

Catalysis depends on C397, which acts as the Amidino-cysteine intermediate.

The protein belongs to the arginine deiminase family.

Its subcellular location is the cytoplasm. It carries out the reaction L-arginine + H2O = L-citrulline + NH4(+). Its pathway is amino-acid degradation; L-arginine degradation via ADI pathway; carbamoyl phosphate from L-arginine: step 1/2. This Listeria innocua serovar 6a (strain ATCC BAA-680 / CLIP 11262) protein is Arginine deiminase.